A 333-amino-acid chain; its full sequence is 1,5-anhydro-D-fructose reductase (333 aa).

NADP(+) contacts are provided by residues 9–12, 33–34, R38, 71–76, 93–94, N120, 162–163, and Y283; these read ASTI, SS, TTNELH, EK, and WR.

It belongs to the Gfo/Idh/MocA family. Monomer.

It catalyses the reaction 1,5-anhydro-D-mannitol + NADP(+) = 1,5-anhydro-D-fructose + NADPH + H(+). In terms of biological role, catalyzes the NADPH-specific reduction of 1,5-anhydro-D-fructose to 1,5-anhydro-D-mannitol. The chain is 1,5-anhydro-D-fructose reductase (afr) from Rhizobium meliloti (strain 1021) (Ensifer meliloti).